The primary structure comprises 585 residues: Suppressor of mec-8 and unc-52 protein homolog 2 (585 aa).

The segment covering 1-14 (MKPSKSHHKEKTAR) has biased composition (basic residues). Disordered stretches follow at residues 1–52 (MKPS…SSFH) and 219–324 (KKKK…PRDK). Residues 15–39 (RREEKLEESDNPKYRDRAKERRENQ) show a composition bias toward basic and acidic residues. 4 R-[ED] repeats span residues 16–17 (RE), 29–30 (RD), 36–37 (RE), and 258–259 (RE). The span at 276–288 (LSTKQEEPPVART) shows a compositional bias: basic and acidic residues. R-[ED] repeat units follow at residues 322-323 (RD), 436-437 (RD), 445-446 (RE), 450-451 (RE), 540-541 (RD), and 542-543 (RD). The segment at 523 to 585 (FQFGVKMQDG…EAQTPKRSKH (63 aa)) is disordered. Basic and acidic residues predominate over residues 530 to 548 (QDGRKTRKQNRDRDQKLNN). Residue T579 is modified to Phosphothreonine.

Belongs to the RED family. Component of the spliceosome. Interacts with SMU1. In terms of tissue distribution, highly expressed in seedlings at 7 days after germination, young flowers before anthesis and developing siliques. Expressed at lower levels in roots, expanding leaves, open flowers, dry seeds and inflorescences. Not detected in senescing leaves.

It localises to the nucleus. Auxiliary spliceosomal protein involved in splicing of specific pre-mRNAs that affect multiple aspects of development. This chain is Suppressor of mec-8 and unc-52 protein homolog 2 (SMU2), found in Arabidopsis thaliana (Mouse-ear cress).